Consider the following 104-residue polypeptide: 11 kDa late embryogenesis abundant protein (104 aa).

Over residues 1–24 the composition is skewed to low complexity; that stretch reads MQSGKNAAASAKETAANVAASAKA. Residues 1–104 are disordered; it reads MQSGKNAAAS…TGHRTGTGGI (104 aa). Basic and acidic residues predominate over residues 25 to 74; that stretch reads GMEKTKASLQEKGEKMTAHDPMQKEMAREKKEERKHEAEYEKQAAKEHNA. The segment covering 75-89 has biased composition (polar residues); that stretch reads AQKQTTGIGTGTHSY.

Belongs to the LEA type 1 family. As to expression, maximally expressed in dry seeds. Also present in mid-maturation embryos.

LEA proteins are late embryonic proteins abundant in higher plant seed embryos. They may play an essential role in seed survival and in controlling water exchanges during seed desiccation and imbibition. In Helianthus annuus (Common sunflower), this protein is 11 kDa late embryogenesis abundant protein.